A 1091-amino-acid chain; its full sequence is ATP-dependent helicase/deoxyribonuclease subunit B (1091 aa).

Belongs to the helicase family. AddB/RexB type 2 subfamily. Heterodimer of AddA and RexB. Requires Mg(2+) as cofactor.

Functionally, the heterodimer acts as both an ATP-dependent DNA helicase and an ATP-dependent, dual-direction single-stranded exonuclease. Recognizes the chi site generating a DNA molecule suitable for the initiation of homologous recombination. This subunit has 5' -&gt; 3' nuclease activity but not helicase activity. The protein is ATP-dependent helicase/deoxyribonuclease subunit B of Streptococcus pneumoniae (strain CGSP14).